We begin with the raw amino-acid sequence, 577 residues long: Pentatricopeptide repeat-containing protein At2g01390 (577 aa).

PPR repeat units lie at residues 121 to 155 (DHFT…GVLI), 156 to 190 (DTVT…GCEP), 191 to 225 (TVVS…RVSP), 226 to 260 (NCHT…GVQP), 261 to 295 (DKAA…GVVL), 382 to 416 (DSFV…GIHL), 417 to 451 (KKSA…QHSL), 452 to 482 (GCYQ…LPDD), 485 to 519 (GVAA…EIMP), and 520 to 554 (SLGT…LVAS).

The protein belongs to the PPR family. P subfamily.

The sequence is that of Pentatricopeptide repeat-containing protein At2g01390 from Arabidopsis thaliana (Mouse-ear cress).